The primary structure comprises 148 residues: FAD synthase (148 aa).

ATP is bound by residues 5-6, 10-13, Asp-92, and Tyr-119; these read TF and HPGH.

It belongs to the archaeal FAD synthase family. As to quaternary structure, homodimer. Requires a divalent metal cation as cofactor.

The enzyme catalyses FMN + ATP + H(+) = FAD + diphosphate. It participates in cofactor biosynthesis; FAD biosynthesis; FAD from FMN: step 1/1. Its function is as follows. Catalyzes the transfer of the AMP portion of ATP to flavin mononucleotide (FMN) to produce flavin adenine dinucleotide (FAD) coenzyme. In Methanosphaera stadtmanae (strain ATCC 43021 / DSM 3091 / JCM 11832 / MCB-3), this protein is FAD synthase.